An 863-amino-acid polypeptide reads, in one-letter code: DNA ligase (863 aa).

Residues 76 to 80 (DAAYD), 125 to 126 (SL), and Glu-159 contribute to the NAD(+) site. The active-site N6-AMP-lysine intermediate is the Lys-161. NAD(+) contacts are provided by Arg-182 and Glu-221. The interval 237–256 (EDAGRPPFANPRNAAAGSLR) is disordered. The span at 241 to 253 (RPPFANPRNAAAG) shows a compositional bias: low complexity. The NAD(+) site is built by Lys-346 and Lys-370. The Zn(2+) site is built by Cys-467, Cys-470, Cys-486, and Cys-492. One can recognise a BRCT domain in the interval 781-863 (GLPQTLEGKS…DTLLATGDVQ (83 aa)).

Belongs to the NAD-dependent DNA ligase family. LigA subfamily. It depends on Mg(2+) as a cofactor. Mn(2+) is required as a cofactor.

It carries out the reaction NAD(+) + (deoxyribonucleotide)n-3'-hydroxyl + 5'-phospho-(deoxyribonucleotide)m = (deoxyribonucleotide)n+m + AMP + beta-nicotinamide D-nucleotide.. DNA ligase that catalyzes the formation of phosphodiester linkages between 5'-phosphoryl and 3'-hydroxyl groups in double-stranded DNA using NAD as a coenzyme and as the energy source for the reaction. It is essential for DNA replication and repair of damaged DNA. In Bifidobacterium animalis subsp. lactis (strain AD011), this protein is DNA ligase.